The sequence spans 184 residues: Peptide deformylase (184 aa).

Fe cation-binding residues include Cys111 and His154. The active site involves Glu155. Residue His158 participates in Fe cation binding.

Belongs to the polypeptide deformylase family. The cofactor is Fe(2+).

The catalysed reaction is N-terminal N-formyl-L-methionyl-[peptide] + H2O = N-terminal L-methionyl-[peptide] + formate. Its function is as follows. Removes the formyl group from the N-terminal Met of newly synthesized proteins. Requires at least a dipeptide for an efficient rate of reaction. N-terminal L-methionine is a prerequisite for activity but the enzyme has broad specificity at other positions. The polypeptide is Peptide deformylase (Lacticaseibacillus casei (strain BL23) (Lactobacillus casei)).